A 536-amino-acid chain; its full sequence is MSENREIDATDRRDKTFDKEKLRPHVYSSVAGGMRSTSGDTKAVLLFSLLFALLSYIDAFLYVLGDMVMMNTQMPSSILFIKSVLVLPMTFFFIVIVQKGLRYLSQPRMLEVILIISSVFFLLFGFVIWPYCKRLQPDFFWSRDIFSDGKMKTRHLDFFFPIFLVFSEWASTMLYLVAELWGSLIISFMFFSRAIHQCTEAQVKKFLPTISLISAVVFLSSGLLTKSLNSRRDALPYHEKERLFSQVFIVTSALTVMSAITSFFTDRALAKDDPRHKGKKEHKVRKIGFAGSLKMMQKSRFLRAMTESVVAASVCSNIFEAIYRGGIVLGAVQSSTSKSSYMNRLNAMAQIITSIFLLVMFFKPATHLIERRGWFPVAITAPIVAIITLVLFFPMVFFNNITEGDLIASGEEYVGSFVLENYTGMFLTTIIRISKYCFFDVAKEAASIRVSPVHRHSFRGIHDGLGINIGKTIGSVYCTLVTVVFDVRDVRNVVSVSTVFVGVFCVIWIRSILHINKKYKESIERNDFINVELAEG.

The next 9 membrane-spanning stretches (helical) occupy residues 44 to 64 (VLLF…LYVL), 77 to 97 (SILF…IVIV), 109 to 129 (MLEV…FVIW), 172 to 194 (TMLY…FSRA), 205 to 225 (KFLP…GLLT), 244 to 264 (FSQV…TSFF), 309 to 329 (VVAA…GIVL), 349 to 369 (AQII…THLI), and 378 to 398 (AITA…MVFF). Asparagine 400 and asparagine 421 each carry an N-linked (GlcNAc...) asparagine glycan. The next 2 membrane-spanning stretches (helical) occupy residues 465–485 (LGIN…TVVF) and 493–513 (VVSV…RSIL).

Belongs to the ADP/ATP translocase tlc family.

The protein resides in the cell membrane. ATP transporter involved in the uptake of ATP from the host cell cytoplasm. Provides the microsporidian cell with host ATP in exchange for ADP. This is an obligate exchange system. This energy acquiring activity is an important component of microsporidian parasitism. This Encephalitozoon cuniculi (strain GB-M1) (Microsporidian parasite) protein is ADP,ATP carrier protein 4 (NTT4).